The chain runs to 172 residues: Endoribonuclease YbeY (172 aa).

Zn(2+) contacts are provided by histidine 124, histidine 128, and histidine 134.

The protein belongs to the endoribonuclease YbeY family. Zn(2+) serves as cofactor.

The protein localises to the cytoplasm. Functionally, single strand-specific metallo-endoribonuclease involved in late-stage 70S ribosome quality control and in maturation of the 3' terminus of the 16S rRNA. The chain is Endoribonuclease YbeY from Rhodopseudomonas palustris (strain BisA53).